Here is a 572-residue protein sequence, read N- to C-terminus: MWTFLGIATFTYFYKKCGDVTLANKELLLCVLVFLSLGLVLSYRCRHRHGGLLGRHQSGAQFAAFSDILSALPLIGFFWAKSPESEKKEQLESKKCRKEIGLSETTLTGAATSVSTSFVTDPEVIIVGSGVLGSALAAVLSRDGRKVTVIERDLKEPDRIVGELLQPGGYRVLQELGLGDTVEGLNAHHIHGYIVHDYESRSEVQIPYPLSETNQVQSGIAFHHGRFIMSLRKAAMAEPNVKFIEGVVLQLLEEDDAVIGVQYKDKETGDTKELHAPLTVVADGLFSKFRKSLISSKVSVSSHFVGFLMKDAPQFKPNFAELVLVNPSPVLIYQISSSETRVLVDIRGELPRNLREYMAEQIYPQLPEHLKESFLEASQNGRLRTMPASFLPPSSVNKRGVLILGDAYNLRHPLTGGGMTVALKDIKLWRQLLKDIPDLYDDAAIFQAKKSFFWSRKRTHSFVVNVLAQALYELFSATDDSLHQLRKACFLYFKLGGECVTGPVGLLSILSPHPLVLIRHFFSVAIYATYFCFKSEPWATKPRALFSSGAVLYKACSILFPLIYSEMKYLVH.

The Cytoplasmic segment spans residues 1–19 (MWTFLGIATFTYFYKKCGD). The tract at residues 1 to 98 (MWTFLGIATF…EQLESKKCRK (98 aa)) is interaction with MARCHF6. The stretch at 20–40 (VTLANKELLLCVLVFLSLGLV) is an intramembrane region. Residues 41–572 (LSYRCRHRHG…IYSEMKYLVH (532 aa)) are Cytoplasmic-facing. The required for degradation in response to high membrane cholesterol levels stretch occupies residues 61–72 (QFAAFSDILSAL). A sufficient for enzyme activity region spans residues 116 to 572 (TSFVTDPEVI…IYSEMKYLVH (457 aa)). FAD-binding positions include 131 to 132 (VL), 151 to 152 (ER), Arg-159, Arg-232, Val-248, Asp-406, and Met-419. Residues 514–572 (PLVLIRHFFSVAIYATYFCFKSEPWATKPRALFSSGAVLYKACSILFPLIYSEMKYLVH) form a hydrophobic; mediates interaction with membranes region.

It belongs to the squalene monooxygenase family. In terms of assembly, interacts (via N-terminal domain) with MARCHF6. Interacts with SMIM22; this interaction modulates lipid droplet formation. FAD is required as a cofactor. Ubiquitinated by MARCHF6 in response to high cholesterol levels in intracellular membranes, leading to proteasomal degradation. As to expression, detected in liver.

Its subcellular location is the microsome membrane. It is found in the endoplasmic reticulum membrane. It carries out the reaction squalene + reduced [NADPH--hemoprotein reductase] + O2 = (S)-2,3-epoxysqualene + oxidized [NADPH--hemoprotein reductase] + H2O + H(+). Its pathway is terpene metabolism; lanosterol biosynthesis; lanosterol from farnesyl diphosphate: step 2/3. In terms of biological role, catalyzes the stereospecific oxidation of squalene to (S)-2,3-epoxysqualene, and is considered to be a rate-limiting enzyme in steroid biosynthesis. This is Squalene monooxygenase (Sqle) from Mus musculus (Mouse).